The following is a 227-amino-acid chain: ATP-dependent dethiobiotin synthetase BioD (227 aa).

13-18 (DIGKTY) contributes to the ATP binding site. Threonine 17 contributes to the Mg(2+) binding site. Lysine 38 is an active-site residue. Substrate is bound at residue serine 42. ATP contacts are provided by residues aspartate 55, 116 to 119 (EGSG), and 179 to 180 (NN). Aspartate 55 and glutamate 116 together coordinate Mg(2+).

It belongs to the dethiobiotin synthetase family. As to quaternary structure, homodimer. Mg(2+) is required as a cofactor.

The protein resides in the cytoplasm. The catalysed reaction is (7R,8S)-7,8-diammoniononanoate + CO2 + ATP = (4R,5S)-dethiobiotin + ADP + phosphate + 3 H(+). Its pathway is cofactor biosynthesis; biotin biosynthesis; biotin from 7,8-diaminononanoate: step 1/2. Functionally, catalyzes a mechanistically unusual reaction, the ATP-dependent insertion of CO2 between the N7 and N8 nitrogen atoms of 7,8-diaminopelargonic acid (DAPA, also called 7,8-diammoniononanoate) to form a ureido ring. The chain is ATP-dependent dethiobiotin synthetase BioD from Clostridium botulinum (strain 657 / Type Ba4).